The chain runs to 366 residues: Cyclin-O protein A (366 aa).

Disordered regions lie at residues 18–55 (AAFS…GIKK) and 80–99 (YETP…PYDS).

This sequence belongs to the cyclin family.

Its subcellular location is the cytoplasm. Its function is as follows. Specifically required for generation of multiciliated cells, possibly by promoting a cell cycle state compatible with centriole amplification and maturation. Acts downstream of mcidas to promote mother centriole amplification and maturation in preparation for apical docking. This is Cyclin-O protein A (ccno-a) from Xenopus laevis (African clawed frog).